Consider the following 504-residue polypeptide: Glutamate--tRNA ligase (504 aa).

The 'HIGH' region signature appears at 9–19; the sequence is PSPTGDPHVGT. A 'KMSKS' region motif is present at residues 248-252; sequence KISKR. Residue K251 participates in ATP binding.

It belongs to the class-I aminoacyl-tRNA synthetase family. Glutamate--tRNA ligase type 1 subfamily. Monomer.

Its subcellular location is the cytoplasm. It carries out the reaction tRNA(Glu) + L-glutamate + ATP = L-glutamyl-tRNA(Glu) + AMP + diphosphate. Its function is as follows. Catalyzes the attachment of glutamate to tRNA(Glu) in a two-step reaction: glutamate is first activated by ATP to form Glu-AMP and then transferred to the acceptor end of tRNA(Glu). The polypeptide is Glutamate--tRNA ligase (Acidothermus cellulolyticus (strain ATCC 43068 / DSM 8971 / 11B)).